The sequence spans 242 residues: Host range factor p28 (242 aa).

Residues 21–131 (YIDEPNDIRL…QSILRGLVNW (111 aa)) form the KilA-N domain. The segment at 173–226 (CGICYEVVYSKRLENDRYFGLLDSCNHIFCITCINIWHRTRRETGASDNCPICR) adopts an RING-type zinc-finger fold.

The protein belongs to the orthopoxvirus OPG021 family.

Its subcellular location is the host cytoplasm. It carries out the reaction S-ubiquitinyl-[E2 ubiquitin-conjugating enzyme]-L-cysteine + [acceptor protein]-L-lysine = [E2 ubiquitin-conjugating enzyme]-L-cysteine + N(6)-ubiquitinyl-[acceptor protein]-L-lysine.. RING-finger E3 ubiquitin ligase which catalyzes the formation of both 'Lys-48'- and 'Lys-63'-linked polyubiquitin chains. Plays an important role in virulence by acting as an anti-apoptotic factor. The polypeptide is Host range factor p28 (OPG021) (Cowpox virus (strain Brighton Red) (CPV)).